The chain runs to 456 residues: Methylthioribose-1-phosphate isomerase (456 aa).

The segment at 40–113 (KGLVHGGFIF…CFKGEDKVFE (74 aa)) is thioesterase. The MTR-1-P isomerase stretch occupies residues 124–456 (MFWRGEKMEV…PERITEALKD (333 aa)). Substrate contacts are provided by residues 176–178 (RGA), Arg-211, and Gln-309. The active-site Proton donor is Asp-350. Residue 360–361 (NK) coordinates substrate.

It belongs to the eIF-2B alpha/beta/delta subunits family. MtnA subfamily.

It carries out the reaction 5-(methylsulfanyl)-alpha-D-ribose 1-phosphate = 5-(methylsulfanyl)-D-ribulose 1-phosphate. It functions in the pathway amino-acid biosynthesis; L-methionine biosynthesis via salvage pathway; L-methionine from S-methyl-5-thio-alpha-D-ribose 1-phosphate: step 1/6. Functionally, catalyzes the interconversion of methylthioribose-1-phosphate (MTR-1-P) into methylthioribulose-1-phosphate (MTRu-1-P). The chain is Methylthioribose-1-phosphate isomerase (mtnA) from Aquifex aeolicus (strain VF5).